The chain runs to 393 residues: NADH-quinone oxidoreductase subunit D (393 aa).

Belongs to the complex I 49 kDa subunit family. As to quaternary structure, NDH-1 is composed of 14 different subunits. Subunits NuoB, C, D, E, F, and G constitute the peripheral sector of the complex.

The protein localises to the cell inner membrane. It catalyses the reaction a quinone + NADH + 5 H(+)(in) = a quinol + NAD(+) + 4 H(+)(out). In terms of biological role, NDH-1 shuttles electrons from NADH, via FMN and iron-sulfur (Fe-S) centers, to quinones in the respiratory chain. The immediate electron acceptor for the enzyme in this species is believed to be ubiquinone. Couples the redox reaction to proton translocation (for every two electrons transferred, four hydrogen ions are translocated across the cytoplasmic membrane), and thus conserves the redox energy in a proton gradient. The sequence is that of NADH-quinone oxidoreductase subunit D from Ehrlichia ruminantium (strain Gardel).